The primary structure comprises 463 residues: Nucleobindin-1 (463 aa).

A signal peptide spans M1 to A26. Phosphoserine is present on S86. Phosphothreonine is present on T148. Residues E150–K218 are a coiled coil. A DNA-binding region spans residues H172 to K218. Positions S193 to Q210 are enriched in basic and acidic residues. The disordered stretch occupies residues S193–V221. The tract at residues L228–T321 is binds to GNAI2 and GNAI3. 2 consecutive EF-hand domains span residues P240–K275 and E292–G327. The Ca(2+) site is built by D253, N255, D257, E264, D305, N307, D309, and E316. The GBA motif lies at N303–W333. Residues A341–Q409 adopt a coiled-coil conformation. The disordered stretch occupies residues L368 to L463. Phosphoserine is present on S369. Residues D439–L463 show a composition bias toward basic and acidic residues.

This sequence belongs to the nucleobindin family. As to quaternary structure, interacts (via GBA motif) with guanine nucleotide-binding protein G(i) alpha subunits GNAI1, GNAI2 and GNAI3 with higher affinity for GNAI1 and GNAI3 than for GNAI2. Preferentially interacts with inactive rather than active GNAI3. Interaction with GNAI3 is inhibited when NUCB1 binds calcium, probably due to a conformational change which renders the GBA motif inaccessible.

It localises to the golgi apparatus. The protein resides in the cis-Golgi network membrane. It is found in the cytoplasm. The protein localises to the secreted. In terms of biological role, major calcium-binding protein of the Golgi which may have a role in calcium homeostasis. Acts as a non-receptor guanine nucleotide exchange factor which binds to and activates alpha subunits of guanine nucleotide-binding proteins (G proteins). This Pongo abelii (Sumatran orangutan) protein is Nucleobindin-1 (NUCB1).